A 114-amino-acid polypeptide reads, in one-letter code: Prostate stem cell antigen (114 aa).

The first 11 residues, 1–11 (MAGLALQPGTA), serve as a signal peptide directing secretion. Residues 12 to 86 (LLCYSCKAQV…CCDTDLCNAS (75 aa)) form the UPAR/Ly6 domain. Cystine bridges form between Cys-14–Cys-39, Cys-17–Cys-26, Cys-32–Cys-57, Cys-61–Cys-77, and Cys-78–Cys-83. Asn-31 carries N-linked (GlcNAc...) asparagine glycosylation. Ser-86 carries GPI-anchor amidated serine lipidation. The propeptide at 86–114 (SGAHALQPAAAILALLPALGLLLWGPGQL) is removed in mature form.

Interacts with CHRNA4. Post-translationally, N-glycosylated. In terms of tissue distribution, highly expressed in prostate (basal, secretory and neuroendocrine epithelium cells). Also found in bladder (transitional epithelium), placenta (trophoblasts), stomach (neuroendocrine cells), colon (neuroendocrine cells) and kidney (collecting ducts). Overexpressed in prostate cancers and expression is correlated with tumor stage, grade and androgen-independence. Highly expressed in prostate cancer bone metastases. Expressed in gastric epithelial cells, mainly in the isthmus (at protein level). Not detected in normal intestinal epithelium (at protein level). Expressed in brain cortex; expression is significantly increased in the front cortex of Alzheimer disease patients.

It localises to the cell membrane. Functionally, may be involved in the regulation of cell proliferation. Has a cell-proliferation inhibition activity in vitro. Its function is as follows. May act as a modulator of nicotinic acetylcholine receptors (nAChRs) activity. In vitro inhibits nicotine-induced signaling probably implicating alpha-3:beta-2- or alpha-7-containing nAChRs. This is Prostate stem cell antigen (PSCA) from Homo sapiens (Human).